The following is a 175-amino-acid chain: NADH-quinone oxidoreductase subunit I (175 aa).

2 4Fe-4S ferredoxin-type domains span residues 64 to 93 (KRDEQGRENCTACGLCAVSCPAEAITIIAD) and 110 to 139 (SLYEINMLRCIFCGLCEEACPKDAVYLTEE). [4Fe-4S] cluster contacts are provided by Cys-73, Cys-76, Cys-79, Cys-83, Cys-119, Cys-122, Cys-125, and Cys-129.

Belongs to the complex I 23 kDa subunit family. As to quaternary structure, NDH-1 is composed of 14 different subunits. Subunits NuoA, H, J, K, L, M, N constitute the membrane sector of the complex. It depends on [4Fe-4S] cluster as a cofactor.

It is found in the cell inner membrane. It carries out the reaction a quinone + NADH + 5 H(+)(in) = a quinol + NAD(+) + 4 H(+)(out). Its function is as follows. NDH-1 shuttles electrons from NADH, via FMN and iron-sulfur (Fe-S) centers, to quinones in the respiratory chain. The immediate electron acceptor for the enzyme in this species is believed to be ubiquinone. Couples the redox reaction to proton translocation (for every two electrons transferred, four hydrogen ions are translocated across the cytoplasmic membrane), and thus conserves the redox energy in a proton gradient. The polypeptide is NADH-quinone oxidoreductase subunit I (Cytophaga hutchinsonii (strain ATCC 33406 / DSM 1761 / CIP 103989 / NBRC 15051 / NCIMB 9469 / D465)).